The following is a 266-amino-acid chain: Protein-ADP-ribose hydrolase (266 aa).

One can recognise a Macro domain in the interval 74 to 265 (TDLKDLKPIK…LYKEAFNRDA (192 aa)). ADP-D-ribose contacts are provided by Asp-93, Ile-94, and Asn-107. Zn(2+) is bound by residues Cys-113, His-118, and Cys-120. ADP-D-ribose contacts are provided by Cys-120, Ile-121, Asp-122, Ser-212, Thr-213, Gly-214, and Phe-216.

This sequence belongs to the MacroD-type family. Zn-Macro subfamily. The cofactor is Zn(2+).

It carries out the reaction 4-O-(ADP-D-ribosyl)-L-aspartyl-[protein] + H2O = L-aspartyl-[protein] + ADP-D-ribose + H(+). Functionally, ADP-ribosylhydrolase that specifically reverses the SirTM-mediated mono-ADP-ribosylation at an asparatate residue of GcvH-L, by releasing ADP-ribose from the target protein. May play a role in the regulation of the response to host-induced oxidative stress. This chain is Protein-ADP-ribose hydrolase, found in Staphylococcus aureus (strain MSSA476).